The sequence spans 804 residues: Probable protein phosphatase 2C 18 (804 aa).

The chain crosses the membrane as a helical span at residues 19–39 (DASGPVLFWCVLIIFAVPDAI). The PPM-type phosphatase domain occupies 129–434 (KYIVSSMQGL…ENTTVILVQF (306 aa)). Mn(2+)-binding residues include aspartate 165, glycine 166, glutamine 384, and glutamate 425. Disordered stretches follow at residues 460–509 (STSA…GGSA), 564–599 (DEVE…LNAS), 623–653 (PLQG…DDDV), and 675–804 (VDST…EGSP). Positions 468 to 499 (GSDSDTSATSDEGVDDTATAGTTTTGYEAGSS) are enriched in low complexity. Positions 628 to 637 (DVSSTSTNPN) are enriched in polar residues. The segment covering 638–647 (TATDTGSGSR) has biased composition (low complexity). Residues 713–734 (LVNNDTTVADNNASGVADSTTV) show a composition bias toward polar residues. A compositionally biased stretch (low complexity) spans 776–789 (DATATATASASAAV). Acidic residues predominate over residues 790–804 (ADDEGTAPDDSEGSP).

It belongs to the PP2C family. It depends on Mg(2+) as a cofactor. Mn(2+) is required as a cofactor.

It localises to the membrane. The catalysed reaction is O-phospho-L-seryl-[protein] + H2O = L-seryl-[protein] + phosphate. It catalyses the reaction O-phospho-L-threonyl-[protein] + H2O = L-threonyl-[protein] + phosphate. The polypeptide is Probable protein phosphatase 2C 18 (Oryza sativa subsp. japonica (Rice)).